Consider the following 295-residue polypeptide: Nucleotide-binding protein RBAM_031990 (295 aa).

An ATP-binding site is contributed by 16-23; that stretch reads GMSGAGKT. 67 to 70 provides a ligand contact to GTP; that stretch reads DLRG.

This sequence belongs to the RapZ-like family.

In terms of biological role, displays ATPase and GTPase activities. This chain is Nucleotide-binding protein RBAM_031990, found in Bacillus velezensis (strain DSM 23117 / BGSC 10A6 / LMG 26770 / FZB42) (Bacillus amyloliquefaciens subsp. plantarum).